The chain runs to 203 residues: A-type ATP synthase subunit E (203 aa).

This sequence belongs to the V-ATPase E subunit family. As to quaternary structure, has multiple subunits with at least A(3), B(3), C, D, E, F, H, I and proteolipid K(x).

Its subcellular location is the cell membrane. Its function is as follows. Component of the A-type ATP synthase that produces ATP from ADP in the presence of a proton gradient across the membrane. This chain is A-type ATP synthase subunit E, found in Methanococcus maripaludis (strain C7 / ATCC BAA-1331).